Reading from the N-terminus, the 154-residue chain is 6,7-dimethyl-8-ribityllumazine synthase (154 aa).

Residues F22, 56–58 (AFE), and 80–82 (AVI) contribute to the 5-amino-6-(D-ribitylamino)uracil site. A (2S)-2-hydroxy-3-oxobutyl phosphate-binding site is contributed by 85–86 (ST). H88 serves as the catalytic Proton donor. Residue F113 participates in 5-amino-6-(D-ribitylamino)uracil binding. R127 provides a ligand contact to (2S)-2-hydroxy-3-oxobutyl phosphate.

It belongs to the DMRL synthase family.

The enzyme catalyses (2S)-2-hydroxy-3-oxobutyl phosphate + 5-amino-6-(D-ribitylamino)uracil = 6,7-dimethyl-8-(1-D-ribityl)lumazine + phosphate + 2 H2O + H(+). It participates in cofactor biosynthesis; riboflavin biosynthesis; riboflavin from 2-hydroxy-3-oxobutyl phosphate and 5-amino-6-(D-ribitylamino)uracil: step 1/2. In terms of biological role, catalyzes the formation of 6,7-dimethyl-8-ribityllumazine by condensation of 5-amino-6-(D-ribitylamino)uracil with 3,4-dihydroxy-2-butanone 4-phosphate. This is the penultimate step in the biosynthesis of riboflavin. This Clostridium kluyveri (strain NBRC 12016) protein is 6,7-dimethyl-8-ribityllumazine synthase.